The chain runs to 72 residues: MSKEDSIEVTGTVLEKFPSGLFSVQLEHERVVLAHLAGRLRRNRIRVLAGDKVTLELSPYDLTKGRITFRHR.

Residues 1-72 (MSKEDSIEVT…TKGRITFRHR (72 aa)) enclose the S1-like domain.

Belongs to the IF-1 family. Component of the 30S ribosomal translation pre-initiation complex which assembles on the 30S ribosome in the order IF-2 and IF-3, IF-1 and N-formylmethionyl-tRNA(fMet); mRNA recruitment can occur at any time during PIC assembly.

The protein resides in the cytoplasm. In terms of biological role, one of the essential components for the initiation of protein synthesis. Stabilizes the binding of IF-2 and IF-3 on the 30S subunit to which N-formylmethionyl-tRNA(fMet) subsequently binds. Helps modulate mRNA selection, yielding the 30S pre-initiation complex (PIC). Upon addition of the 50S ribosomal subunit IF-1, IF-2 and IF-3 are released leaving the mature 70S translation initiation complex. The chain is Translation initiation factor IF-1 from Solibacter usitatus (strain Ellin6076).